Reading from the N-terminus, the 189-residue chain is GTP cyclohydrolase 1 (189 aa).

Cys78, His81, and Cys150 together coordinate Zn(2+).

The protein belongs to the GTP cyclohydrolase I family. As to quaternary structure, homomer.

The enzyme catalyses GTP + H2O = 7,8-dihydroneopterin 3'-triphosphate + formate + H(+). It participates in cofactor biosynthesis; 7,8-dihydroneopterin triphosphate biosynthesis; 7,8-dihydroneopterin triphosphate from GTP: step 1/1. The protein is GTP cyclohydrolase 1 of Listeria monocytogenes serotype 4a (strain HCC23).